The chain runs to 113 residues: Dolichyl-diphosphooligosaccharide--protein glycosyltransferase subunit DAD1 (113 aa).

At 1–30 (MGSSAFEVLTFFLKDYKANTPQKLKIIDAY) the chain is on the cytoplasmic side. A helical membrane pass occupies residues 31–51 (LLYILLTGINQFLYCCLVGTF). A topological domain (lumenal) is located at residue proline 52. The chain crosses the membrane as a helical span at residues 53-73 (FNSFLSGFISCVASFVLGVCL). Topologically, residues 74-92 (RLQVNPQNSSNFCGIPPER) are cytoplasmic. Residues 93–113 (AFADFIFAHVVLHLVVMNFIG) traverse the membrane as a helical segment.

It belongs to the DAD/OST2 family. In terms of assembly, component of the oligosaccharyltransferase (OST) complex. As to expression, widely expressed. Greatest expression seen in the epidermis, intermediate expression in the fat body and midgut and mild expression observed in the silk gland.

It is found in the endoplasmic reticulum membrane. It participates in protein modification; protein glycosylation. In terms of biological role, subunit of the oligosaccharyl transferase (OST) complex that catalyzes the initial transfer of a defined glycan (Glc(3)Man(9)GlcNAc(2) in eukaryotes) from the lipid carrier dolichol-pyrophosphate to an asparagine residue within an Asn-X-Ser/Thr consensus motif in nascent polypeptide chains, the first step in protein N-glycosylation. N-glycosylation occurs cotranslationally and the complex associates with the Sec61 complex at the channel-forming translocon complex that mediates protein translocation across the endoplasmic reticulum (ER). All subunits are required for a maximal enzyme activity. The protein is Dolichyl-diphosphooligosaccharide--protein glycosyltransferase subunit DAD1 of Araneus ventricosus (Orbweaver spider).